A 259-amino-acid polypeptide reads, in one-letter code: BTB/POZ domain-containing protein KCTD4 (259 aa).

Residues 1–22 are disordered; sequence MEHKINRREKEKDYEGKHNSLE. The BTB domain occupies 33–134; that stretch reads TLMTLNVGGY…EVKSRWEKEQ (102 aa).

The sequence is that of BTB/POZ domain-containing protein KCTD4 (KCTD4) from Bos taurus (Bovine).